We begin with the raw amino-acid sequence, 157 residues long: 6,7-dimethyl-8-ribityllumazine synthase (157 aa).

Residues F24, 58–60 (SFE), and 82–84 (AVI) each bind 5-amino-6-(D-ribitylamino)uracil. 87 to 88 (ET) contributes to the (2S)-2-hydroxy-3-oxobutyl phosphate binding site. H90 functions as the Proton donor in the catalytic mechanism. F115 contributes to the 5-amino-6-(D-ribitylamino)uracil binding site. (2S)-2-hydroxy-3-oxobutyl phosphate is bound at residue R129.

This sequence belongs to the DMRL synthase family.

It carries out the reaction (2S)-2-hydroxy-3-oxobutyl phosphate + 5-amino-6-(D-ribitylamino)uracil = 6,7-dimethyl-8-(1-D-ribityl)lumazine + phosphate + 2 H2O + H(+). Its pathway is cofactor biosynthesis; riboflavin biosynthesis; riboflavin from 2-hydroxy-3-oxobutyl phosphate and 5-amino-6-(D-ribitylamino)uracil: step 1/2. Functionally, catalyzes the formation of 6,7-dimethyl-8-ribityllumazine by condensation of 5-amino-6-(D-ribitylamino)uracil with 3,4-dihydroxy-2-butanone 4-phosphate. This is the penultimate step in the biosynthesis of riboflavin. The sequence is that of 6,7-dimethyl-8-ribityllumazine synthase from Thermus thermophilus (strain ATCC BAA-163 / DSM 7039 / HB27).